Consider the following 864-residue polypeptide: DNA mismatch repair protein MutS (864 aa).

Position 607-614 (G607–S614) interacts with ATP.

The protein belongs to the DNA mismatch repair MutS family.

In terms of biological role, this protein is involved in the repair of mismatches in DNA. It is possible that it carries out the mismatch recognition step. This protein has a weak ATPase activity. The protein is DNA mismatch repair protein MutS of Neisseria meningitidis serogroup A / serotype 4A (strain DSM 15465 / Z2491).